A 636-amino-acid polypeptide reads, in one-letter code: Chaperone protein DnaK (636 aa).

Thr197 is subject to Phosphothreonine; by autocatalysis. The span at 596–607 shows a compositional bias: low complexity; the sequence is LYQQAQEQQQSG. The disordered stretch occupies residues 596 to 636; it reads LYQQAQEQQQSGSSGGSSDEDVVEDAEIVDEEDEEKRDDNR. Residues 613 to 636 show a composition bias toward acidic residues; that stretch reads SDEDVVEDAEIVDEEDEEKRDDNR.

Belongs to the heat shock protein 70 family.

In terms of biological role, acts as a chaperone. The protein is Chaperone protein DnaK of Rubrobacter xylanophilus (strain DSM 9941 / JCM 11954 / NBRC 16129 / PRD-1).